The sequence spans 104 residues: N(2)-fixation sustaining protein CowN (104 aa).

It belongs to the CowN family.

Its function is as follows. Is required to sustain N(2)-dependent growth in the presence of low levels of carbon monoxide (CO). Probably acts by protecting the N(2) fixation ability of the nitrogenase complex, which is inactivated in the presence of CO. In Arcobacter nitrofigilis (strain ATCC 33309 / DSM 7299 / CCUG 15893 / LMG 7604 / NCTC 12251 / CI) (Campylobacter nitrofigilis), this protein is N(2)-fixation sustaining protein CowN.